The following is a 245-amino-acid chain: 5'-nucleotidase SurE (245 aa).

Residues D8, D9, S39, and N91 each contribute to the a divalent metal cation site.

Belongs to the SurE nucleotidase family. The cofactor is a divalent metal cation.

It localises to the cytoplasm. It carries out the reaction a ribonucleoside 5'-phosphate + H2O = a ribonucleoside + phosphate. Nucleotidase that shows phosphatase activity on nucleoside 5'-monophosphates. The sequence is that of 5'-nucleotidase SurE from Herminiimonas arsenicoxydans.